The sequence spans 400 residues: 1-deoxy-D-xylulose 5-phosphate reductoisomerase (400 aa).

Threonine 10, glycine 11, serine 12, isoleucine 13, glycine 36, asparagine 38, and asparagine 124 together coordinate NADPH. Lysine 125 is a binding site for 1-deoxy-D-xylulose 5-phosphate. Glutamate 126 contacts NADPH. Residue aspartate 150 coordinates Mn(2+). 1-deoxy-D-xylulose 5-phosphate is bound by residues serine 151, glutamate 152, serine 186, and histidine 209. Glutamate 152 serves as a coordination point for Mn(2+). Glycine 215 provides a ligand contact to NADPH. The 1-deoxy-D-xylulose 5-phosphate site is built by serine 222, asparagine 227, lysine 228, and glutamate 231. Glutamate 231 lines the Mn(2+) pocket.

Belongs to the DXR family. It depends on Mg(2+) as a cofactor. Requires Mn(2+) as cofactor.

It carries out the reaction 2-C-methyl-D-erythritol 4-phosphate + NADP(+) = 1-deoxy-D-xylulose 5-phosphate + NADPH + H(+). It participates in isoprenoid biosynthesis; isopentenyl diphosphate biosynthesis via DXP pathway; isopentenyl diphosphate from 1-deoxy-D-xylulose 5-phosphate: step 1/6. Catalyzes the NADPH-dependent rearrangement and reduction of 1-deoxy-D-xylulose-5-phosphate (DXP) to 2-C-methyl-D-erythritol 4-phosphate (MEP). This Aliivibrio salmonicida (strain LFI1238) (Vibrio salmonicida (strain LFI1238)) protein is 1-deoxy-D-xylulose 5-phosphate reductoisomerase.